A 475-amino-acid chain; its full sequence is MSRRKAGSAPRRVEPAPAANPDDEMEMQDLVIELKPEPDAQPQQAPRLGPFSPKEVSSAGRFGGEPHHSPGPMPAGAALLALGPRNPWTLWTPLTPNYPDRQPWTDKHPDLLTCGRCLQTFPLEAITAFMDHKKLGCQLFRGPSRGQGSEREELKALSCLRCGKQFTVAWKLLRHAQWDHGLSIYQTESEAPEAPLLGLAEVAAAVSAVVGPAAEAKSPRASGSGLTRRSPTCPVCKKTLSSFSNLKVHMRSHTGERPYACDQCPYACAQSSKLNRHKKTHRQVPPQSPLMADTSQEQASAAPPEPAVHAAAPTSTLPCSGGEGAGAAATAGVQEPGAPGSGAQAGPGGDTWGAITTEQRTDPANSQKASPKKMPKSGGKSRGPGGSCEFCGKHFTNSSNLTVHRRSHTGERPYTCEFCNYACAQSSKLNRHRRMHGMTPGSTRFECPHCHVPFGLRATLDKHLRQKHPEAAGEA.

Residues 1-78 (MSRRKAGSAP…SPGPMPAGAA (78 aa)) are disordered. K35 participates in a covalent cross-link: Glycyl lysine isopeptide (Lys-Gly) (interchain with G-Cter in SUMO2). 3 consecutive C2H2-type zinc fingers follow at residues 157 to 180 (LSCL…QWDH), 231 to 253 (PTCP…MRSH), and 259 to 281 (YACD…KKTH). The interval 275 to 385 (NRHKKTHRQV…KSGGKSRGPG (111 aa)) is disordered. Low complexity-rich tracts occupy residues 295 to 313 (SQEQ…AAAP) and 326 to 338 (GAAA…EPGA). Gly residues predominate over residues 339–351 (PGSGAQAGPGGDT). Polar residues predominate over residues 354–367 (AITTEQRTDPANSQ). C2H2-type zinc fingers lie at residues 386 to 408 (GSCE…RRSH), 414 to 436 (YTCE…RRMH), and 445 to 468 (FECP…RQKH).

Belongs to the krueppel C2H2-type zinc-finger protein family. As to quaternary structure, interacts with KLF4.

The protein resides in the nucleus. In terms of biological role, may be a transcriptional corepressor with KLF4. In Homo sapiens (Human), this protein is Zinc finger protein 296 (ZNF296).